The following is a 366-amino-acid chain: Chorismate synthase (366 aa).

NADP(+) is bound by residues Arg48 and Arg54. FMN-binding positions include 125 to 127 (RSS), 238 to 239 (NA), Gly278, 293 to 297 (KPTSS), and Arg319.

It belongs to the chorismate synthase family. As to quaternary structure, homotetramer. It depends on FMNH2 as a cofactor.

It catalyses the reaction 5-O-(1-carboxyvinyl)-3-phosphoshikimate = chorismate + phosphate. It functions in the pathway metabolic intermediate biosynthesis; chorismate biosynthesis; chorismate from D-erythrose 4-phosphate and phosphoenolpyruvate: step 7/7. Its function is as follows. Catalyzes the anti-1,4-elimination of the C-3 phosphate and the C-6 proR hydrogen from 5-enolpyruvylshikimate-3-phosphate (EPSP) to yield chorismate, which is the branch point compound that serves as the starting substrate for the three terminal pathways of aromatic amino acid biosynthesis. This reaction introduces a second double bond into the aromatic ring system. The sequence is that of Chorismate synthase from Burkholderia ambifaria (strain MC40-6).